A 593-amino-acid polypeptide reads, in one-letter code: Scarecrow-like protein 1 (593 aa).

Disordered regions lie at residues 29-61 (NPKL…PCLT) and 188-216 (YQNE…SKEV). Residues 35 to 48 (LNENGNNNGVSSAQ) show a composition bias toward polar residues. The span at 202 to 211 (SSSADSNSHV) shows a compositional bias: low complexity. Positions 213–593 (SKEVVSQATP…KSLIVASAWR (381 aa)) constitute a GRAS domain. Residues 220-280 (ATPKQILISC…AARMAASGKF (61 aa)) are leucine repeat I (LRI). Positions 299–364 (MQVLFEVCPC…GKRPRLRLTG (66 aa)) are VHIID. The VHIID motif lies at 330–334 (VHIID). Residues 380–411 (IIGLRLEQLAEDNGVSFKFKAMPSKTSIVSPS) form a leucine repeat II (LRII) region. A PFYRE region spans residues 421–515 (LIVNFAFQLH…RQCLARDIVN (95 aa)). The interval 518–593 (ACEGEERIER…KSLIVASAWR (76 aa)) is SAW.

Belongs to the GRAS family. As to expression, expressed in seedlings, roots, shoots, leaves, flowers and siliques.

The protein localises to the nucleus. Its function is as follows. Probable transcription factor involved in plant development. The protein is Scarecrow-like protein 1 (SCL1) of Arabidopsis thaliana (Mouse-ear cress).